A 247-amino-acid chain; its full sequence is Protein eak-4 (247 aa).

Residue Gly2 is the site of N-myristoyl glycine attachment.

Expressed in the 2 embryonic head hypodermal cells XXXL/R.

The protein resides in the cell membrane. Functionally, together with eak-6 and sdf-9, negatively regulates dauer larva formation downstream of the insulin-like receptor daf-2 and in parallel with age-1, pdk-1 and akt-1. This chain is Protein eak-4, found in Caenorhabditis elegans.